Consider the following 244-residue polypeptide: Lytic polysaccharide monooxygenase-like protein ANIA_04702 (244 aa).

The signal sequence occupies residues 1 to 23 (MLMSTSPSPWLAAAMLCIGLANA). His24 serves as a coordination point for Cu(2+). Methylhistidine is present on His24. N-linked (GlcNAc...) asparagine glycans are attached at residues Asn57, Asn80, Asn118, Asn159, Asn192, and Asn198. 2 disulfide bridges follow: Cys72–Cys177 and Cys142–Cys196. Asn215 carries GPI-anchor amidated asparagine lipidation. A propeptide spans 216–244 (AGLEAVTVPSFLTAVVPTFLGIAYGLLMA) (removed in mature form).

The protein belongs to the X325 family. Requires Cu(2+) as cofactor. The catalytically essential N-terminal histidine His-24 is post-translationally modified by methylation to prevent protonation of the histidine side chain, and protect the critical active site of the enzyme from oxidative damage.

It is found in the cell membrane. In terms of biological role, lytic polysaccharide monooxygenase-like protein that has diverged to biological functions other than polysaccharide degradation since it does not perform oxidative cleavage of polysaccharides. Acts as a cell surface-bound protein that functions in the copper-accumulation pathway. May also act as the major cell wall sensor that regulates MAP kinase-dependent hyphal anastomosis, the fusion of hyphal cells. This Emericella nidulans (strain FGSC A4 / ATCC 38163 / CBS 112.46 / NRRL 194 / M139) (Aspergillus nidulans) protein is Lytic polysaccharide monooxygenase-like protein ANIA_04702.